We begin with the raw amino-acid sequence, 183 residues long: UPF0398 protein PEPE_0933 (183 aa).

It belongs to the UPF0398 family.

The protein is UPF0398 protein PEPE_0933 of Pediococcus pentosaceus (strain ATCC 25745 / CCUG 21536 / LMG 10740 / 183-1w).